The following is a 154-amino-acid chain: MIMGQLMNMRELFNKKKLHALVFSMWCVNLHASSLSDGIAIEPFEINAKSNRFVEFKVYNNTDEDYIVTQKVVSEENSIKKAKIPFVVNPPIRLLRKRSDAAMGIIYLNEGEVFDKKRKYYLSVSFIPKKKDSDDLGFNIIFTQQIAVKLSALN.

The protein belongs to the periplasmic pilus chaperone family.

Could be required for the biogenesis of a putative fimbria. In Escherichia coli, this protein is Protein FasC (fasC).